A 604-amino-acid polypeptide reads, in one-letter code: UvrABC system protein C (604 aa).

The region spanning T12–L90 is the GIY-YIG domain. One can recognise a UVR domain in the interval K200–T235.

Belongs to the UvrC family. In terms of assembly, interacts with UvrB in an incision complex.

The protein resides in the cytoplasm. The UvrABC repair system catalyzes the recognition and processing of DNA lesions. UvrC both incises the 5' and 3' sides of the lesion. The N-terminal half is responsible for the 3' incision and the C-terminal half is responsible for the 5' incision. In Trichlorobacter lovleyi (strain ATCC BAA-1151 / DSM 17278 / SZ) (Geobacter lovleyi), this protein is UvrABC system protein C.